Here is a 34-residue protein sequence, read N- to C-terminus: Photosystem II reaction center protein Psb30 (34 aa).

The chain crosses the membrane as a helical span at residues 6–26 (VIGQLTSLAMIVLVGPAVIVV).

It belongs to the Psb30/Ycf12 family. PSII is composed of 1 copy each of membrane proteins PsbA, PsbB, PsbC, PsbD, PsbE, PsbF, PsbH, PsbI, PsbJ, PsbK, PsbL, PsbM, PsbT, PsbX, PsbY, PsbZ, Psb30/Ycf12, peripheral proteins of the oxygen-evolving complex and a large number of cofactors. It forms dimeric complexes.

It is found in the plastid. The protein localises to the chloroplast thylakoid membrane. Functionally, a core subunit of photosystem II (PSII), probably helps stabilize the reaction center. This Gracilaria tenuistipitata var. liui (Red alga) protein is Photosystem II reaction center protein Psb30.